A 405-amino-acid polypeptide reads, in one-letter code: Coiled-coil domain-containing protein 91 (405 aa).

Residues 1–16 are GGA1-binding motif; it reads MDDDDFGGFEAAETFD. The tract at residues 1–27 is disordered; that stretch reads MDDDDFGGFEAAETFDGGNGETQTTSP. A phosphoserine mark is found at Ser-43 and Ser-46. Positions 126-376 form a coiled coil; sequence GANVSNIQLR…QKRLDQVIRQ (251 aa). The segment at 210–377 is homodimerization; that stretch reads LSIIVDEYKH…KRLDQVIRQR (168 aa).

As to quaternary structure, homodimer. Interacts with GGA1, GGA2 and AP1G1.

It is found in the membrane. It localises to the golgi apparatus. Its subcellular location is the trans-Golgi network membrane. The protein localises to the trans-Golgi network. Its function is as follows. Involved in the regulation of membrane traffic through the trans-Golgi network (TGN). Functions in close cooperation with the GGAs in the sorting of hydrolases to lysosomes. This chain is Coiled-coil domain-containing protein 91 (CCDC91), found in Pongo abelii (Sumatran orangutan).